The sequence spans 325 residues: N-acetyl-gamma-glutamyl-phosphate reductase (325 aa).

The active site involves Cys131.

The protein belongs to the NAGSA dehydrogenase family. Type 1 subfamily.

Its subcellular location is the cytoplasm. The catalysed reaction is N-acetyl-L-glutamate 5-semialdehyde + phosphate + NADP(+) = N-acetyl-L-glutamyl 5-phosphate + NADPH + H(+). The protein operates within amino-acid biosynthesis; L-arginine biosynthesis; N(2)-acetyl-L-ornithine from L-glutamate: step 3/4. Catalyzes the NADPH-dependent reduction of N-acetyl-5-glutamyl phosphate to yield N-acetyl-L-glutamate 5-semialdehyde. The chain is N-acetyl-gamma-glutamyl-phosphate reductase from Methylobacterium sp. (strain 4-46).